We begin with the raw amino-acid sequence, 204 residues long: Inactive ribonuclease-like protein 9 (204 aa).

An N-terminal signal peptide occupies residues 1–26 (MMRTLITIHPLPLLLLLQQLLQPVQF). 3 disulfides stabilise this stretch: Cys97/Cys152, Cys115/Cys167, and Cys122/Cys129. 2 N-linked (GlcNAc...) asparagine glycosylation sites follow: Asn130 and Asn142.

The protein belongs to the pancreatic ribonuclease family.

The protein localises to the secreted. Its function is as follows. Does not exhibit any ribonuclease activity. The protein is Inactive ribonuclease-like protein 9 (RNASE9) of Symphalangus syndactylus (Siamang).